We begin with the raw amino-acid sequence, 358 residues long: MRHAREVTFARLMRTFAAVSDTQTVASKHKTAPKAADIANRLRKEKEKEKDDKNEVPVSPLQSRVNELKQFSQQLQSVHPSVFAKALYRSSLYEDQNIIAINKPYDVPLHNINGIRNSIAECLPLLAKITDNMRPGSQLHLCHKLEKETTGVLILAKTEEAAEHVQTLIQSHKVEMKYLAITVGVPVPSEGVIDIPVIERAVVGPQPHFKMALSPLFKVNEDGDGVTRVRAHRQAHAAVTRYQVLDNTSGCSLVELQPLTGVKNQLRVHMALALTCPILGDHKYSHWSKLAPQKLPEGTLRRLGLVQSKTRYLPLHLHSRRIVLPGFKGHRDITVSCPLPKYFINALKRLEIPLPAKE.

Residues 1–12 constitute a mitochondrion transit peptide; it reads MRHAREVTFARL.

Belongs to the pseudouridine synthase RluA family.

The protein localises to the mitochondrion matrix. It localises to the nucleus. Its subcellular location is the cytoplasm. The catalysed reaction is uridine in 5S rRNA = pseudouridine in 5S rRNA. The enzyme catalyses a uridine in tRNA = a pseudouridine in tRNA. It catalyses the reaction a uridine in mRNA = a pseudouridine in mRNA. Its function is as follows. Catalyzes uridine to pseudouridine isomerization (pseudouridylation) of different mitochondrial RNA substrates. Acts on position 1397 in 16S mitochondrial ribosomal RNA (16S mt-rRNA). This modification is required for the assembly of 16S mt-rRNA into a functional mitochondrial ribosome. Acts on position 39 in mitochondrial tRNA(Phe). Also catalyzes pseudouridylation of mRNAs in nucleus: acts as a regulator of pre-mRNA splicing by mediating pseudouridylation of pre-mRNAs at locations associated with alternatively spliced regions. Pseudouridylation of pre-mRNAs near splice sites directly regulates mRNA splicing and mRNA 3'-end processing. The chain is Pseudouridylate synthase RPUSD4, mitochondrial from Danio rerio (Zebrafish).